A 274-amino-acid chain; its full sequence is Serine/threonine-protein kinase 1 (274 aa).

Residues 16–273 (AVLAPKVVNG…HSFLASRHDY (258 aa)) enclose the Protein kinase domain. Residues 22 to 30 (VVNGRFGKM) and Lys-46 contribute to the ATP site. Asp-134 acts as the Proton acceptor in catalysis.

Belongs to the protein kinase superfamily. Ser/Thr protein kinase family.

It catalyses the reaction L-seryl-[protein] + ATP = O-phospho-L-seryl-[protein] + ADP + H(+). It carries out the reaction L-threonyl-[protein] + ATP = O-phospho-L-threonyl-[protein] + ADP + H(+). This Orgyia pseudotsugata multicapsid polyhedrosis virus (OpMNPV) protein is Serine/threonine-protein kinase 1 (PK1).